An 8892-amino-acid chain; its full sequence is Nonribosomal peptide synthetase 32 (8892 aa).

The region spanning 12–85 is the Carrier 1 domain; sequence EPSKLVLGRV…QLAESIAQQN (74 aa). Ser46 carries the O-(pantetheine 4'-phosphoryl)serine modification. Residues 88 to 112 are disordered; it reads AGNGVNGHANGNGMNGNGLHNEATI. Residues 93-108 show a composition bias toward low complexity; the sequence is NGHANGNGMNGNGLHN. The tract at residues 567–956 is condensation 1; that stretch reads PTSANVPRRV…EGVDLSVRDF (390 aa). Residues 989 to 1386 form an adenylation 1 region; it reads KMAEQPEALA…GRIDSQIKIR (398 aa). Residues 1523–1599 form the Carrier 2 domain; that stretch reads ISATAVEREL…ELAAEVQATQ (77 aa). At Ser1560 the chain carries O-(pantetheine 4'-phosphoryl)serine. The tract at residues 1609–2039 is epimerization 1; that stretch reads GAIALSPIQQ…YGQTVKSLVN (431 aa). The segment at 2083–2518 is condensation 2; the sequence is EDILPCSPIQ…LLLPAEEAKL (436 aa). Residues 2543–2934 form an adenylation 2 region; it reads SQPEALAVSA…GRRDTQVKIR (392 aa). Residues 3061-3137 enclose the Carrier 3 domain; it reads SSATPIEREL…ELAANSQTGR (77 aa). Position 3098 is an O-(pantetheine 4'-phosphoryl)serine (Ser3098). Positions 3153-3590 are epimerization 2; the sequence is LSPIQQMFFD…GDTVKTLVEE (438 aa). A condensation 3 region spans residues 3634–4061; sequence EDILPCSAIQ…NVDRPLRELT (428 aa). An adenylation 3 region spans residues 4098 to 4488; sequence TLPEALAISS…GRIDSQIKIR (391 aa). The Carrier 4 domain occupies 4627-4703; sequence APTTDLERKL…DLSRVVEEKC (77 aa). Ser4664 bears the O-(pantetheine 4'-phosphoryl)serine mark. The segment at 4760-5181 is condensation 4; the sequence is EDVYPCSPMQ…LLTDEDCDQL (422 aa). The segment at 5205–5605 is adenylation 4; that stretch reads TSYPTAPAIS…GRRDTQVKIR (401 aa). The Carrier 5 domain occupies 5745–5821; sequence MPTTPMEQKL…DLAEAMEEKG (77 aa). Position 5782 is an O-(pantetheine 4'-phosphoryl)serine (Ser5782). The segment at 5868–6285 is condensation 5; it reads EDVYPCSPLQ…LLSPGQMAQI (418 aa). The adenylation 5 stretch occupies residues 6307 to 6700; sequence QMTTRPAATA…GRIDTQIKIR (394 aa). The region spanning 6834–6911 is the Carrier 6 domain; it reads ELTTTIERQL…ELATQTQTTE (78 aa). The residue at position 6872 (Ser6872) is an O-(pantetheine 4'-phosphoryl)serine. The interval 6923 to 7360 is epimerization 3; it reads NFQLSPIQQM…SYSCAIESLV (438 aa). The condensation 6 stretch occupies residues 7403–7834; sequence VQDILPCSPI…LLPAGDANQI (432 aa). An adenylation 6 region spans residues 7855 to 8253; the sequence is QQMAAHPTAQ…LDRIGTQVKI (399 aa). Positions 8380 to 8456 constitute a Carrier 7 domain; it reads APVGRNEEIL…AMAARVTADI (77 aa). Ser8417 carries the O-(pantetheine 4'-phosphoryl)serine modification. The tract at residues 8490–8878 is condensation 7; the sequence is HFAFDATGPC…EIIEDSGCNV (389 aa).

Belongs to the NRP synthetase family.

It participates in secondary metabolite biosynthesis. Its function is as follows. Nonribosomal peptide synthetase; part of the gene cluster that mediates the biosynthesis of the lipopeptides W493 A and B. W493 A and B consist of six amino acid residues D-allo-thr, L-Ala, D-Ala, L-Gln, D-Tyr, and L-Val/L-Ile linked to a 3-hydroxy-4-methyltetradecanoic acid polyketide chain. The biosynthesis starts with formation of the linear polyketide chain by the highly reducing polyketide synthase PKS40. The gene cluster contains a putative acyl-CoA ligase (FPSE_09184) for formation of a CoA thioester polyketide. The thiol bond could be hydrolyzed by the putative thioesterase (FPSE_09186) and then accepted by the first T domain in module 1 of NRPS32. The second T domain is responsible for accepting a threonine, which is adenylated by the A domain and epimerized to the D-allo-threonine formed by the E domain. The five successive modules incorporate Ala, Ala, Gln, Tyr, and Val/Ile into the final product, which is released by cyclization. The polypeptide is Nonribosomal peptide synthetase 32 (Fusarium pseudograminearum (strain CS3096) (Wheat and barley crown-rot fungus)).